Here is a 48-residue protein sequence, read N- to C-terminus: uncharacterized protein (48 aa).

This is an uncharacterized protein from His1 virus (isolate Australia/Victoria) (His1V).